The following is a 175-amino-acid chain: uncharacterized protein (175 aa).

Helical transmembrane passes span 25–45 (MIAI…TTIS), 46–66 (ATGP…FFLL), 97–117 (FAGW…LTAV), 124–144 (WLPG…LTLL), and 155–175 (TEFW…VTGI).

The protein belongs to the amino acid-polyamine-organocation (APC) superfamily.

It localises to the cell membrane. This is an uncharacterized protein from Lactobacillus delbrueckii subsp. lactis.